A 665-amino-acid chain; its full sequence is Intraflagellar transport protein 70B (665 aa).

TPR repeat units follow at residues 11-44, 45-78, 154-187, 189-221, 393-424, 425-457, and 459-492; these read DGEF…SPRS, RAGL…HPEL, TDGQ…SGYQ, DLSY…GIRQ, LTIQ…EKYI, PVLM…CNDH, and VWKL…HYDN. Positions 130–154 are disordered; sequence PGSRSLVEQLPSREGGEESGGENET. Residues 508–535 adopt a coiled-coil conformation; that stretch reads YIMTSQNEEAEELMRKIEKEEEQLSYDD. The TPR 8 repeat unit spans residues 544-577; that stretch reads CIVNLVIGTLYCAKGNYDFGISRVIKSLEPYNKK.

Belongs to the TTC30/dfy-1/fleer family. In terms of assembly, interacts with the IFT B complex components IFT27, IFT46, IFT74, IFT52, IFT57, IFT80, IFT81 and IFT88. Interacts with KIF17.

The protein resides in the cell projection. Its subcellular location is the cilium. Required for polyglutamylation of axonemal tubulin. Plays a role in anterograde intraflagellar transport (IFT), the process by which cilia precursors are transported from the base of the cilium to the site of their incorporation at the tip. The polypeptide is Intraflagellar transport protein 70B (Homo sapiens (Human)).